The following is a 262-amino-acid chain: Phosphatidylglycerol--prolipoprotein diacylglyceryl transferase 1 (262 aa).

The next 4 membrane-spanning stretches (helical) occupy residues 15–35 (WYGI…SINA), 40–60 (LNFD…IIGA), 83–103 (QGGL…FIYC), and 108–128 (VDFL…QGIG). Position 129 (arginine 129) interacts with a 1,2-diacyl-sn-glycero-3-phospho-(1'-sn-glycerol). The next 3 membrane-spanning stretches (helical) occupy residues 169-189 (TFLY…IILY), 197-217 (GVVI…IEGL), and 229-249 (VAQL…IIIV).

This sequence belongs to the Lgt family.

It localises to the cell membrane. It catalyses the reaction L-cysteinyl-[prolipoprotein] + a 1,2-diacyl-sn-glycero-3-phospho-(1'-sn-glycerol) = an S-1,2-diacyl-sn-glyceryl-L-cysteinyl-[prolipoprotein] + sn-glycerol 1-phosphate + H(+). It functions in the pathway protein modification; lipoprotein biosynthesis (diacylglyceryl transfer). Catalyzes the transfer of the diacylglyceryl group from phosphatidylglycerol to the sulfhydryl group of the N-terminal cysteine of a prolipoprotein, the first step in the formation of mature lipoproteins. The chain is Phosphatidylglycerol--prolipoprotein diacylglyceryl transferase 1 from Clostridium perfringens (strain 13 / Type A).